The following is a 310-amino-acid chain: Olfactory receptor 5P55 (310 aa).

At 1–25 (METQNHTTVTEFILLGLTESSTLRV) the chain is on the extracellular side. Residue asparagine 5 is glycosylated (N-linked (GlcNAc...) asparagine). A helical transmembrane segment spans residues 26–46 (ILFMVFLGIYTVTLVGNFSII). At 47–54 (SLIRSCPQ) the chain is on the cytoplasmic side. Residues 55–75 (LHTPMYLFLSHLAFVDIGFST) form a helical membrane-spanning segment. The Extracellular segment spans residues 76–99 (SITPTMFKGFLGNRLVLSVAACIA). Cysteine 97 and cysteine 189 are oxidised to a cystine. The helical transmembrane segment at 100 to 120 (QFCITVTFGTVECFLLAVMAY) threads the bilayer. The Cytoplasmic portion of the chain corresponds to 121–133 (DRYVAICSPLLYS). The chain crosses the membrane as a helical span at residues 134–154 (THMSPRICFLLVGASYVGGCV). At 155–196 (NSGAFTSCLSILSFCGPNQIDHFFCDFPAVLKLSCSDVSIIG) the chain is on the extracellular side. Residues 197 to 217 (IIPSISAGSIIVITVFVIAVS) traverse the membrane as a helical segment. The Cytoplasmic portion of the chain corresponds to 218–237 (YAYILITILKMRSTEGRQKA). The chain crosses the membrane as a helical span at residues 238–258 (FSTCTSHLTAVTLYYGTITFI). Topologically, residues 259-271 (YVMPKSNYSTAQN) are extracellular. Asparagine 265 carries N-linked (GlcNAc...) asparagine glycosylation. A helical membrane pass occupies residues 272–292 (KILSVFYTVVIPMLNPLIYSL). Over 293 to 310 (RNRDVKEALRKAIIRIFP) the chain is Cytoplasmic.

This sequence belongs to the G-protein coupled receptor 1 family.

The protein localises to the cell membrane. Potential odorant receptor. This chain is Olfactory receptor 5P55, found in Mus musculus (Mouse).